Here is a 221-residue protein sequence, read N- to C-terminus: Lectin L6 (221 aa).

6 consecutive repeat copies span residues 1 to 38 (VQWHQIPGKLMHITATPHFLWGVNSNQQIYLCRQPCYD), 39 to 75 (GQWTQISGSLKQVDADDHEVWGVNRNDDIYKRPVDGS), 76 to 113 (GSWVRVSGKLKHVSASGYGYIWGVNSNDQIYKCPKPCN), 114 to 150 (GAWTQVNGRLKQIDGGQSMVYGVNSANAIYRRPVDGS), 151 to 188 (GSWQQISGSLKHITGSGLSEVFGVNSNDQIYRCTKPCS), and 189 to 221 (GQWSLIDGRLKQCDATGNTIVGVNSVDNIYRSG). Positions 1–221 (VQWHQIPGKL…NSVDNIYRSG (221 aa)) are 6 X approximate tandem repeats. C32 and C36 are joined by a disulfide. The cysteines at positions 108 and 112 are disulfide-linked. C183 and C187 are oxidised to a cystine.

This sequence belongs to the tectonin family. Hemocytes.

The protein localises to the cytoplasmic vesicle. It is found in the secretory vesicle. Lipopolysaccharide-binding protein with Gram-negative antibacterial activity. Binds zinc and calcium. This Tachypleus tridentatus (Japanese horseshoe crab) protein is Lectin L6.